A 311-amino-acid chain; its full sequence is MKGSHGPCSDLTVTMLENVPLAPLTTLKIGGNARWLVRPSGVKGLSRYCRTCPGDLPRFILGGGSNLLVDDNGFHGVVVDLTHTLNAIVVEHQDAHGGILRVEAGAATRKTAHVARQNGLAGLAFMAGIPGTIGGALRMNAGAYGCDVKGVLLDAQLMDATGNLHTRNAQELGLAYRHCDLPKGWIFVSARFHLARGESEAIKSQMRDYNHKRTQAQPLRYPSAGSVFRNPAGAAAWQLIDAAGLRGHRIGDAQISEKHSNFFVNLGAASSLHMEELIELARNRVAQHSGVQLTLEIGILTPQGLRTEPGR.

Positions 28-197 constitute an FAD-binding PCMH-type domain; it reads KIGGNARWLV…VSARFHLARG (170 aa). The active site involves Arg177. Ser226 (proton donor) is an active-site residue. Glu296 is an active-site residue.

This sequence belongs to the MurB family. FAD serves as cofactor.

The protein resides in the cytoplasm. The catalysed reaction is UDP-N-acetyl-alpha-D-muramate + NADP(+) = UDP-N-acetyl-3-O-(1-carboxyvinyl)-alpha-D-glucosamine + NADPH + H(+). The protein operates within cell wall biogenesis; peptidoglycan biosynthesis. Its function is as follows. Cell wall formation. The polypeptide is UDP-N-acetylenolpyruvoylglucosamine reductase (Magnetococcus marinus (strain ATCC BAA-1437 / JCM 17883 / MC-1)).